The primary structure comprises 141 residues: Nucleoside diphosphate kinase (141 aa).

K11, F59, R87, T93, R104, and N114 together coordinate ATP. The Pros-phosphohistidine intermediate role is filled by H117.

This sequence belongs to the NDK family. Mg(2+) is required as a cofactor.

The protein localises to the cytoplasm. The catalysed reaction is a 2'-deoxyribonucleoside 5'-diphosphate + ATP = a 2'-deoxyribonucleoside 5'-triphosphate + ADP. It carries out the reaction a ribonucleoside 5'-diphosphate + ATP = a ribonucleoside 5'-triphosphate + ADP. Functionally, major role in the synthesis of nucleoside triphosphates other than ATP. The ATP gamma phosphate is transferred to the NDP beta phosphate via a ping-pong mechanism, using a phosphorylated active-site intermediate. The sequence is that of Nucleoside diphosphate kinase from Staphylothermus marinus (strain ATCC 43588 / DSM 3639 / JCM 9404 / F1).